A 154-amino-acid polypeptide reads, in one-letter code: Ribonuclease H (154 aa).

The RNase H type-1 domain occupies 7 to 148 (KPETVEIYTD…ADALAREGIA (142 aa)). Residues aspartate 16, glutamate 54, aspartate 76, and aspartate 140 each coordinate Mg(2+).

The protein belongs to the RNase H family. As to quaternary structure, monomer. It depends on Mg(2+) as a cofactor.

It is found in the cytoplasm. It catalyses the reaction Endonucleolytic cleavage to 5'-phosphomonoester.. Endonuclease that specifically degrades the RNA of RNA-DNA hybrids. This Paramagnetospirillum magneticum (strain ATCC 700264 / AMB-1) (Magnetospirillum magneticum) protein is Ribonuclease H.